The following is a 199-amino-acid chain: Probable GTP-binding protein EngB (199 aa).

The EngB-type G domain maps to 28-199; that stretch reads DLPEIALAGR…ESWDTILEYL (172 aa). GTP contacts are provided by residues 36-43, 63-67, 81-84, 148-151, and 180-182; these read GRSNVGKS, GKTQL, DVPG, TKAD, and FSS. Residues S43 and T65 each coordinate Mg(2+).

This sequence belongs to the TRAFAC class TrmE-Era-EngA-EngB-Septin-like GTPase superfamily. EngB GTPase family. The cofactor is Mg(2+).

Necessary for normal cell division and for the maintenance of normal septation. The protein is Probable GTP-binding protein EngB of Streptococcus equi subsp. zooepidemicus (strain H70).